The following is a 205-amino-acid chain: Ras-related protein RABD1 (205 aa).

Residue Ser2 is modified to N-acetylserine. GTP is bound by residues 15–23 (GDSSVGKSC), 33–40 (YIDSYIST), 63–67 (DTAGQ), 121–124 (NKND), and 151–153 (SAK). Positions 37 to 45 (YISTIGVDF) match the Effector region motif. 2 stretches are compositionally biased toward polar residues: residues 174–186 (GSQTNANKTSGPG) and 194–205 (PIQQNNGGCCGQ). The disordered stretch occupies residues 174 to 205 (GSQTNANKTSGPGTVQMKGQPIQQNNGGCCGQ). S-geranylgeranyl cysteine attachment occurs at residues Cys202 and Cys203.

It belongs to the small GTPase superfamily. Rab family. In terms of assembly, does not interact with GC5. Interacts with XI-2/MYA2.

The protein resides in the golgi apparatus. The protein localises to the trans-Golgi network membrane. It is found in the golgi apparatus membrane. Protein transport. Regulator of membrane traffic from the Golgi apparatus towards the endoplasmic reticulum (ER). This Arabidopsis thaliana (Mouse-ear cress) protein is Ras-related protein RABD1 (RABD1).